The following is a 124-amino-acid chain: Fluoride-specific ion channel FluC (124 aa).

Transmembrane regions (helical) follow at residues 4 to 24 (ILFV…ISIF), 35 to 55 (FGTL…YALG), 70 to 90 (VGLL…LLLI), and 95 to 115 (WLKA…MVYL). Residues Gly74 and Thr77 each coordinate Na(+).

Belongs to the fluoride channel Fluc/FEX (TC 1.A.43) family.

It localises to the cell inner membrane. It carries out the reaction fluoride(in) = fluoride(out). Na(+) is not transported, but it plays an essential structural role and its presence is essential for fluoride channel function. Functionally, fluoride-specific ion channel. Important for reducing fluoride concentration in the cell, thus reducing its toxicity. The chain is Fluoride-specific ion channel FluC from Shewanella woodyi (strain ATCC 51908 / MS32).